Here is a 174-residue protein sequence, read N- to C-terminus: Gamma-crystallin A (174 aa).

2 consecutive Beta/gamma crystallin 'Greek key' domains span residues 2 to 40 and 41 to 83; these read GKITFYEDRDFQGRCYNCISDCPNLRVYFSRCNSIRVDS and GCWM…RIIP. A connecting peptide region spans residues 84-87; the sequence is HTSS. 2 Beta/gamma crystallin 'Greek key' domains span residues 88–128 and 129–171; these read HKLR…HVLE and GCWV…RRVT.

It belongs to the beta/gamma-crystallin family. Monomer.

Its function is as follows. Crystallins are the dominant structural components of the vertebrate eye lens. This chain is Gamma-crystallin A (CRYGA), found in Homo sapiens (Human).